The sequence spans 961 residues: Leucine--tRNA ligase (961 aa).

The short motif at 41–51 is the 'HIGH' region element; the sequence is PYLNGNLHAGH. The 'KMSKS' region signature appears at 632–636; the sequence is KMSKS. Lys635 is a binding site for ATP.

Belongs to the class-I aminoacyl-tRNA synthetase family.

The protein resides in the cytoplasm. The enzyme catalyses tRNA(Leu) + L-leucine + ATP = L-leucyl-tRNA(Leu) + AMP + diphosphate. This chain is Leucine--tRNA ligase, found in Methanosarcina acetivorans (strain ATCC 35395 / DSM 2834 / JCM 12185 / C2A).